Consider the following 306-residue polypeptide: uncharacterized protein (306 aa).

It belongs to the asfivirus CP312R family.

It is found in the virion. This is an uncharacterized protein from African swine fever virus (isolate Pig/Kenya/KEN-50/1950) (ASFV).